Here is a 233-residue protein sequence, read N- to C-terminus: NAD-dependent protein deacylase (233 aa).

The region spanning 1–230 (MKNIMILSGA…ALDIENFMKD (230 aa)) is the Deacetylase sirtuin-type domain. 9–28 (GAGLSAPSGLKTFRDNDGLW) serves as a coordination point for NAD(+). Positions 53 and 56 each coordinate substrate. 88–91 (QNVD) contributes to the NAD(+) binding site. His106 acts as the Proton acceptor in catalysis. 4 residues coordinate Zn(2+): Cys114, Cys117, Cys133, and Cys136. Residues 172–174 (GTS) and Ile213 contribute to the NAD(+) site.

This sequence belongs to the sirtuin family. Class III subfamily. Zn(2+) serves as cofactor.

The protein resides in the cytoplasm. The enzyme catalyses N(6)-acetyl-L-lysyl-[protein] + NAD(+) + H2O = 2''-O-acetyl-ADP-D-ribose + nicotinamide + L-lysyl-[protein]. The catalysed reaction is N(6)-succinyl-L-lysyl-[protein] + NAD(+) + H2O = 2''-O-succinyl-ADP-D-ribose + nicotinamide + L-lysyl-[protein]. Functionally, NAD-dependent lysine deacetylase and desuccinylase that specifically removes acetyl and succinyl groups on target proteins. Modulates the activities of several proteins which are inactive in their acylated form. This chain is NAD-dependent protein deacylase, found in Campylobacter jejuni (strain RM1221).